The following is a 336-amino-acid chain: Effector SCP41 (336 aa).

The signal sequence occupies residues 1–19 (MRTETASLLLLAALSVAEE). 2 disordered regions span residues 59–99 (LFSP…STNN) and 189–230 (PVGN…GQKG). Positions 63–74 (QQQQQQQQQQQQ) are enriched in low complexity.

Interacts with A.thaliana CBP60G; the interaction is direct. Interacts with A.thaliana SARD1. Interacts with G.hirsutum CBP60B.

The protein localises to the secreted. It localises to the host nucleus. Its function is as follows. Effector that binds transcription regulators in the host plant to suppress the host's innate immune response. Inhibits the host plant transcription regulators CBP60G and SARD1. This is Effector SCP41 from Verticillium dahliae (strain VdLs.17 / ATCC MYA-4575 / FGSC 10137) (Verticillium wilt).